The following is a 369-amino-acid chain: tRNA/tmRNA (uracil-C(5))-methyltransferase (369 aa).

5 residues coordinate S-adenosyl-L-methionine: Gln190, Tyr218, Asn223, Glu239, and Asp301. The Nucleophile role is filled by Cys326. Glu360 serves as the catalytic Proton acceptor.

The protein belongs to the class I-like SAM-binding methyltransferase superfamily. RNA M5U methyltransferase family. TrmA subfamily.

It catalyses the reaction uridine(54) in tRNA + S-adenosyl-L-methionine = 5-methyluridine(54) in tRNA + S-adenosyl-L-homocysteine + H(+). The enzyme catalyses uridine(341) in tmRNA + S-adenosyl-L-methionine = 5-methyluridine(341) in tmRNA + S-adenosyl-L-homocysteine + H(+). Functionally, dual-specificity methyltransferase that catalyzes the formation of 5-methyluridine at position 54 (m5U54) in all tRNAs, and that of position 341 (m5U341) in tmRNA (transfer-mRNA). This chain is tRNA/tmRNA (uracil-C(5))-methyltransferase, found in Vibrio parahaemolyticus serotype O3:K6 (strain RIMD 2210633).